Reading from the N-terminus, the 205-residue chain is Molybdenum cofactor guanylyltransferase (205 aa).

Residues 14 to 16, lysine 27, aspartate 77, and aspartate 107 contribute to the GTP site; that span reads LAG. A Mg(2+)-binding site is contributed by aspartate 107.

This sequence belongs to the MobA family. Monomer. Mg(2+) is required as a cofactor.

The protein localises to the cytoplasm. The enzyme catalyses Mo-molybdopterin + GTP + H(+) = Mo-molybdopterin guanine dinucleotide + diphosphate. Its function is as follows. Transfers a GMP moiety from GTP to Mo-molybdopterin (Mo-MPT) cofactor (Moco or molybdenum cofactor) to form Mo-molybdopterin guanine dinucleotide (Mo-MGD) cofactor. The sequence is that of Molybdenum cofactor guanylyltransferase from Burkholderia lata (strain ATCC 17760 / DSM 23089 / LMG 22485 / NCIMB 9086 / R18194 / 383).